The following is a 398-amino-acid chain: Acetate kinase (398 aa).

Asparagine 9 contacts Mg(2+). ATP is bound at residue lysine 16. Residue arginine 89 participates in substrate binding. Aspartate 146 serves as the catalytic Proton donor/acceptor. ATP is bound by residues 206-210 (HLGNG), 281-283 (DCR), and 329-333 (GIGEN). Glutamate 384 provides a ligand contact to Mg(2+).

The protein belongs to the acetokinase family. In terms of assembly, homodimer. Requires Mg(2+) as cofactor. It depends on Mn(2+) as a cofactor.

The protein resides in the cytoplasm. It catalyses the reaction acetate + ATP = acetyl phosphate + ADP. Its pathway is metabolic intermediate biosynthesis; acetyl-CoA biosynthesis; acetyl-CoA from acetate: step 1/2. Its function is as follows. Catalyzes the formation of acetyl phosphate from acetate and ATP. Can also catalyze the reverse reaction. The sequence is that of Acetate kinase from Vibrio campbellii (strain ATCC BAA-1116).